Here is a 467-residue protein sequence, read N- to C-terminus: Sialic acid-binding Ig-like lectin 12 (467 aa).

The N-terminal stretch at 1–18 is a signal peptide; it reads MLLLLLLLLLWGIKGVEG. The Extracellular segment spans residues 19-353; it reads QNPQEVFTLN…ATLSEMMMGT (335 aa). In terms of domain architecture, Ig-like V-type spans 21-141; that stretch reads PQEVFTLNVE…TKYNYMWDKM (121 aa). Disulfide bonds link cysteine 40/cysteine 176, cysteine 45/cysteine 108, and cysteine 170/cysteine 219. N-linked (GlcNAc...) asparagine glycosylation is present at asparagine 46. Arginine 126 is an N-acetylneuraminate binding site. 2 consecutive Ig-like C2-type domains span residues 152-239 and 242-339; these read PQIL…LNVS and PKNL…LSLS. Residues asparagine 167, asparagine 197, asparagine 216, asparagine 227, asparagine 237, asparagine 244, asparagine 262, asparagine 287, and asparagine 294 are each glycosylated (N-linked (GlcNAc...) asparagine). Cysteine 278 and cysteine 323 are joined by a disulfide. Residues 354–374 traverse the membrane as a helical segment; it reads FVGSGVTALLFLSVCILLLAV. At 375–467 the chain is on the cytoplasmic side; it reads RSYRRKPARP…IKFPQRTAWP (93 aa). The ITIM motif motif lies at 430-435; it reads IHYATL. Phosphotyrosine is present on residues tyrosine 432 and tyrosine 455. Residues 453–458 carry the SLAM-like motif motif; that stretch reads TEYSEI.

It belongs to the immunoglobulin superfamily. SIGLEC (sialic acid binding Ig-like lectin) family. Homodimer; disulfide-linked. Interacts with PTPN6/SHP-1 and PTPN11/SHP-2 upon phosphorylation. In terms of processing, phosphorylation of Tyr-432 is required for binding to PTPN6 and PTPN11. Phosphorylation of Tyr-455 is involved in binding to PTPN6. Tyr-432 needs to be phosphorylated prior to Tyr-455. Expressed by monocytic/myeloid lineage cells. Found at higher levels in spleen, liver and heart. Found at lower levels in kidney and lung.

It localises to the membrane. Functionally, putative adhesion molecule that mediates sialic-acid dependent binding to cells. The sialic acid recognition site may be masked by cis interactions with sialic acids on the same cell surface. In the immune response, may act as an inhibitory receptor upon ligand induced tyrosine phosphorylation by recruiting cytoplasmic phosphatase(s) via their SH2 domain(s) that block signal transduction through dephosphorylation of signaling molecules. This is Sialic acid-binding Ig-like lectin 12 (Siglec12) from Mus musculus (Mouse).